Reading from the N-terminus, the 111-residue chain is Small ribosomal subunit protein bS18 (111 aa).

Residues 1–32 are disordered; the sequence is MDLENTENVENNNNNEEEVKAKGERKAHFNKE. Residues 17–32 show a composition bias toward basic and acidic residues; it reads EEVKAKGERKAHFNKE.

It belongs to the bacterial ribosomal protein bS18 family. As to quaternary structure, part of the 30S ribosomal subunit. Forms a tight heterodimer with protein bS6.

Its function is as follows. Binds as a heterodimer with protein bS6 to the central domain of the 16S rRNA, where it helps stabilize the platform of the 30S subunit. In Brachyspira hyodysenteriae (strain ATCC 49526 / WA1), this protein is Small ribosomal subunit protein bS18.